The primary structure comprises 47 residues: Lysis protein for colicin E7 (47 aa).

Residues Met1–Ala19 form the signal peptide. A lipid anchor (N-palmitoyl cysteine) is attached at Cys20. Cys20 carries S-diacylglycerol cysteine lipidation.

It is found in the cell outer membrane. In terms of biological role, lysis proteins are required for both colicin release and partial cell lysis. In Escherichia coli, this protein is Lysis protein for colicin E7 (lys).